The sequence spans 81 residues: U10-myrmicitoxin-Mri1b (81 aa).

A signal peptide spans 1-26; the sequence is MRLSYISLTLAIIFVMAIVHAPETEA. Positions 27–52 are excised as a propeptide; it reads KAYPEADAVAEAIAVGEADAVGVADP. The residue at position 80 (V80) is a Valine amide.

The protein belongs to the formicidae venom precursor-01 superfamily. Expressed by the venom gland.

The protein localises to the secreted. Induces paralysis after injection into blowflies (L.caesar), and then death within 24 hours. May have antimicrobial properties, like most ant linear peptides. This is U10-myrmicitoxin-Mri1b from Manica rubida (European giant red ant).